Consider the following 309-residue polypeptide: Homoserine kinase (309 aa).

Residue 91–101 participates in ATP binding; sequence PIGSGLGSSAC.

It belongs to the GHMP kinase family. Homoserine kinase subfamily.

It is found in the cytoplasm. It catalyses the reaction L-homoserine + ATP = O-phospho-L-homoserine + ADP + H(+). It participates in amino-acid biosynthesis; L-threonine biosynthesis; L-threonine from L-aspartate: step 4/5. Catalyzes the ATP-dependent phosphorylation of L-homoserine to L-homoserine phosphate. This is Homoserine kinase from Citrobacter koseri (strain ATCC BAA-895 / CDC 4225-83 / SGSC4696).